The sequence spans 141 residues: Large-conductance mechanosensitive channel (141 aa).

Transmembrane regions (helical) follow at residues 21–41 (VGVI…GDLI) and 85–105 (GSFL…FMMV).

Belongs to the MscL family. In terms of assembly, homopentamer.

Its subcellular location is the cell inner membrane. In terms of biological role, channel that opens in response to stretch forces in the membrane lipid bilayer. May participate in the regulation of osmotic pressure changes within the cell. This is Large-conductance mechanosensitive channel from Dechloromonas aromatica (strain RCB).